A 90-amino-acid chain; its full sequence is Heat shock protein beta-7 (90 aa).

The sHSP domain maps to 39 to 90 (PLTFPARPGGQGNIKTLGDAYEFTVDMRDFSPEDIIVTTSNNHIEVRAEKKP).

This sequence belongs to the small heat shock protein (HSP20) family. As to quaternary structure, interacts with C-terminal domain of actin-binding protein 280. Found in both cardiac and skeletal muscle.

The protein resides in the cytoplasm. The protein localises to the nucleus. It is found in the cajal body. This chain is Heat shock protein beta-7 (Hspb7), found in Rattus norvegicus (Rat).